A 93-amino-acid chain; its full sequence is Co-chaperonin GroES (93 aa).

Belongs to the GroES chaperonin family. Heptamer of 7 subunits arranged in a ring. Interacts with the chaperonin GroEL.

The protein localises to the cytoplasm. In terms of biological role, together with the chaperonin GroEL, plays an essential role in assisting protein folding. The GroEL-GroES system forms a nano-cage that allows encapsulation of the non-native substrate proteins and provides a physical environment optimized to promote and accelerate protein folding. GroES binds to the apical surface of the GroEL ring, thereby capping the opening of the GroEL channel. This is Co-chaperonin GroES from Streptococcus gordonii (strain Challis / ATCC 35105 / BCRC 15272 / CH1 / DL1 / V288).